A 265-amino-acid polypeptide reads, in one-letter code: Uridylate kinase (265 aa).

The tract at residues M1–S29 is disordered. K40–G43 is an ATP binding site. G81 is a UMP binding site. ATP contacts are provided by G82 and R86. UMP-binding positions include D101 and M162–T169. ATP is bound by residues F195 and D198.

Belongs to the UMP kinase family. In terms of assembly, homohexamer.

The protein localises to the cytoplasm. The enzyme catalyses UMP + ATP = UDP + ADP. It functions in the pathway pyrimidine metabolism; CTP biosynthesis via de novo pathway; UDP from UMP (UMPK route): step 1/1. Its activity is regulated as follows. Inhibited by UTP. Its function is as follows. Catalyzes the reversible phosphorylation of UMP to UDP. This Mycolicibacterium paratuberculosis (strain ATCC BAA-968 / K-10) (Mycobacterium paratuberculosis) protein is Uridylate kinase.